The following is a 28-amino-acid chain: Trypsin inhibitor 2 (28 aa).

3 disulfide bridges follow: Cys3-Cys20, Cys10-Cys22, and Cys16-Cys27.

It belongs to the protease inhibitor I7 (squash-type serine protease inhibitor) family.

The protein resides in the secreted. In terms of biological role, inhibits trypsin. This is Trypsin inhibitor 2 from Momordica charantia (Bitter gourd).